The following is a 242-amino-acid chain: Octanoyltransferase (242 aa).

One can recognise a BPL/LPL catalytic domain in the interval 31–206 (SQTTDEIWFL…LFLKNFGYNQ (176 aa)). Substrate contacts are provided by residues 70-77 (RGGQVTYH), 137-139 (SIG), and 150-152 (GLA). Cysteine 168 (acyl-thioester intermediate) is an active-site residue.

The protein belongs to the LipB family.

It localises to the cytoplasm. It catalyses the reaction octanoyl-[ACP] + L-lysyl-[protein] = N(6)-octanoyl-L-lysyl-[protein] + holo-[ACP] + H(+). Its pathway is protein modification; protein lipoylation via endogenous pathway; protein N(6)-(lipoyl)lysine from octanoyl-[acyl-carrier-protein]: step 1/2. In terms of biological role, catalyzes the transfer of endogenously produced octanoic acid from octanoyl-acyl-carrier-protein onto the lipoyl domains of lipoate-dependent enzymes. Lipoyl-ACP can also act as a substrate although octanoyl-ACP is likely to be the physiological substrate. The chain is Octanoyltransferase from Coxiella burnetii (strain RSA 493 / Nine Mile phase I).